A 347-amino-acid polypeptide reads, in one-letter code: MSDRLTLLRPDDWHIHLRDGAVLPHTVADVARTFGRAIIMPNLVPPVRNAQQADAYRQRILAARPAGSRFEPLMVLYLTDQTTPEDIRTAKASGFVHAAKLYPAGATTNSDSGVTSIDKIFPALEAMAEVGMLLLVHGEVTRGEIDVFDREKVFIDEHLRRVVERFPTLKVVFEHITTGDAVQFVNEASANVAATITAHHLLYNRNHMLVGGIRPHFYCLPILKRNTHQVALLDAATSGSGKFFLGTDSAPHAQHAKENACGCAGCYTAYAAIELYAEAFEQRNALDKLEGFASLHGPAFYGLPANQDTITLVRDEWTAPTSLPFGELTVIPLRAGETLRWRLEEHA.

Residues His-14 and His-16 each contribute to the Zn(2+) site. Substrate contacts are provided by residues 16–18 and Asn-42; that span reads HLR. The Zn(2+) site is built by Lys-100, His-137, and His-175. At Lys-100 the chain carries N6-carboxylysine. His-137 is a binding site for substrate. Leu-220 contacts substrate. Position 248 (Asp-248) interacts with Zn(2+). Residue Asp-248 is part of the active site. Substrate contacts are provided by His-252 and Ala-264.

This sequence belongs to the metallo-dependent hydrolases superfamily. DHOase family. Class II DHOase subfamily. Homodimer. Zn(2+) is required as a cofactor.

The enzyme catalyses (S)-dihydroorotate + H2O = N-carbamoyl-L-aspartate + H(+). It functions in the pathway pyrimidine metabolism; UMP biosynthesis via de novo pathway; (S)-dihydroorotate from bicarbonate: step 3/3. Catalyzes the reversible cyclization of carbamoyl aspartate to dihydroorotate. This Pseudomonas syringae pv. tomato (strain ATCC BAA-871 / DC3000) protein is Dihydroorotase.